We begin with the raw amino-acid sequence, 227 residues long: Ras-related protein Rab-3C (227 aa).

The GTP site is built by serine 39, glycine 42, lysine 43, threonine 44, serine 45, threonine 56, serine 57, serine 61, and threonine 62. Residue threonine 44 participates in Mg(2+) binding. The Switch 1 signature appears at 53-66 (DSFTSAFVSTVGID). 2 residues coordinate Mg(2+): threonine 62 and aspartate 85. Threonine 86 bears the Phosphothreonine mark. Residues 86–104 (TAGQERYRTITTAYYRGAM) carry the Switch 2 motif. Residues glycine 88, asparagine 143, lysine 144, aspartate 146, alanine 174, and lysine 175 each contribute to the GTP site. A phosphoserine mark is found at serine 196 and serine 198. Threonine 206 carries the post-translational modification Phosphothreonine. Residues cysteine 225 and cysteine 227 are each lipidated (S-geranylgeranyl cysteine). The residue at position 227 (cysteine 227) is a Cysteine methyl ester.

The protein belongs to the small GTPase superfamily. Rab family. As to quaternary structure, interacts with RIMS1, RIMS2, RPH3A and RPH3AL. The GTP-bound form interacts with REP15. Interacts with GDI2, CHM and CHML; phosphorylation at Thr-86 disrupts these interactions. Interacts with MADD (via uDENN domain); the GTP-bound form is preferred for interaction. Mg(2+) is required as a cofactor. Phosphorylation of Thr-86 in the switch II region by LRRK2 prevents the association of RAB regulatory proteins, including CHM, CHML and RAB GDP dissociation inhibitor GDI2.

It is found in the cell membrane. It carries out the reaction GTP + H2O = GDP + phosphate + H(+). With respect to regulation, regulated by guanine nucleotide exchange factors (GEFs) which promote the exchange of bound GDP for free GTP. Regulated by GTPase activating proteins (GAPs) which increase the GTP hydrolysis activity. Inhibited by GDP dissociation inhibitors (GDIs) which prevent Rab-GDP dissociation. In terms of biological role, the small GTPases Rab are key regulators of intracellular membrane trafficking, from the formation of transport vesicles to their fusion with membranes. Rabs cycle between an inactive GDP-bound form and an active GTP-bound form that is able to recruit to membranes different sets of downstream effectors directly responsible for vesicle formation, movement, tethering and fusion. In Bos taurus (Bovine), this protein is Ras-related protein Rab-3C (RAB3C).